A 151-amino-acid polypeptide reads, in one-letter code: UPF0756 membrane protein HS_0993 (151 aa).

Transmembrane regions (helical) follow at residues 1 to 21, 52 to 72, 81 to 101, and 123 to 143; these read MSLQ…LGVL, YGVN…IVSG, ALIH…AWFG, and ILGV…AGIL.

This sequence belongs to the UPF0756 family.

It localises to the cell membrane. This is UPF0756 membrane protein HS_0993 from Histophilus somni (strain 129Pt) (Haemophilus somnus).